Here is a 333-residue protein sequence, read N- to C-terminus: Phosphate acyltransferase (333 aa).

This sequence belongs to the PlsX family. As to quaternary structure, homodimer. Probably interacts with PlsY.

It is found in the cytoplasm. The catalysed reaction is a fatty acyl-[ACP] + phosphate = an acyl phosphate + holo-[ACP]. The protein operates within lipid metabolism; phospholipid metabolism. Its function is as follows. Catalyzes the reversible formation of acyl-phosphate (acyl-PO(4)) from acyl-[acyl-carrier-protein] (acyl-ACP). This enzyme utilizes acyl-ACP as fatty acyl donor, but not acyl-CoA. The chain is Phosphate acyltransferase from Thermoanaerobacterium thermosaccharolyticum (strain ATCC 7956 / DSM 571 / NCIMB 9385 / NCA 3814 / NCTC 13789 / WDCM 00135 / 2032) (Clostridium thermosaccharolyticum).